Here is a 481-residue protein sequence, read N- to C-terminus: F-box protein At1g49360 (481 aa).

Positions 105 to 156 constitute an F-box domain; that stretch reads LKEDLFLPSDLVRLILSRLSFKDNIRSSTVCKAWGDIAASVRVKSRRCWLLY.

This chain is F-box protein At1g49360, found in Arabidopsis thaliana (Mouse-ear cress).